A 180-amino-acid polypeptide reads, in one-letter code: uncharacterized protein (180 aa).

Residues 1–22 (MKRSIIAAAVFSSFFMSAGVFA) form the signal peptide.

It belongs to the fimbrial protein family.

Its function is as follows. Part of the yehABCD fimbrial operon. Could contribute to adhesion to various surfaces in specific environmental niches. This is an uncharacterized protein from Escherichia coli (strain K12).